Here is a 623-residue protein sequence, read N- to C-terminus: Glutamine--fructose-6-phosphate aminotransferase [isomerizing] (623 aa).

The active-site Nucleophile; for GATase activity is the C2. The Glutamine amidotransferase type-2 domain maps to 2–228; the sequence is CGIVGYIGQA…NDQVVTITAD (227 aa). SIS domains lie at 295-435 and 468-613; these read IDEA…LRGN and LGQD…VDQP. K618 (for Fru-6P isomerization activity) is an active-site residue.

As to quaternary structure, homodimer.

It localises to the cytoplasm. It carries out the reaction D-fructose 6-phosphate + L-glutamine = D-glucosamine 6-phosphate + L-glutamate. Catalyzes the first step in hexosamine metabolism, converting fructose-6P into glucosamine-6P using glutamine as a nitrogen source. The sequence is that of Glutamine--fructose-6-phosphate aminotransferase [isomerizing] from Corynebacterium glutamicum (strain ATCC 13032 / DSM 20300 / JCM 1318 / BCRC 11384 / CCUG 27702 / LMG 3730 / NBRC 12168 / NCIMB 10025 / NRRL B-2784 / 534).